Consider the following 158-residue polypeptide: MPSMPEEPILTPTPDRFCMFPIQYPQIWEMYKKAEASFWTAEEVDLSQDNRDWENSLTNDERHFIKHVLAFFAASDGIVLENLSTRFMSDVQISEARAFYGFQIAIENIHSEMYSLLLDTYIKDNKERDHLFRAIETIPCDEKSRMGYEMDQRISKLR.

The protein belongs to the ribonucleoside diphosphate reductase small chain family.

The sequence is that of Putative ribonucleoside-diphosphate reductase small chain B (RNR2B) from Arabidopsis thaliana (Mouse-ear cress).